The primary structure comprises 119 residues: Large ribosomal subunit protein bL20 (119 aa).

It belongs to the bacterial ribosomal protein bL20 family.

Its function is as follows. Binds directly to 23S ribosomal RNA and is necessary for the in vitro assembly process of the 50S ribosomal subunit. It is not involved in the protein synthesizing functions of that subunit. In Xylella fastidiosa (strain M23), this protein is Large ribosomal subunit protein bL20.